The chain runs to 1682 residues: Merozoite surface protein 1 (1682 aa).

The N-terminal stretch at 1-19 (MKIIFFLCSFLFFIINTQC) is a signal peptide. Residues 68–110 (AVSTQSAKNPPGATVPSGTASTKGAIRSPGAANPSDDSSDSDA) form a disordered region. N-linked (GlcNAc...) asparagine glycosylation is found at Asn-233, Asn-462, Asn-528, and Asn-599. The segment at 696–729 (SETTEDGGHSTHTLSQSGETEVTEETEETVGHTT) is disordered. N-linked (GlcNAc...) asparagine glycans are attached at residues Asn-785, Asn-881, Asn-901, Asn-947, Asn-1071, and Asn-1178. Positions 870 to 918 (ITGTSSTSSPGNTTVNTAQSATHSNSQNQQSNASSTNTQNGVAVSSGPA) are disordered. Positions 871 to 909 (TGTSSTSSPGNTTVNTAQSATHSNSQNQQSNASSTNTQN) are enriched in low complexity. Disordered stretches follow at residues 1212 to 1241 (TPPQPDVTPSPLSVRVSGSSGSTKEETQIP) and 1433 to 1453 (KEFPSSPPTTPPSPAKTDEQK). Polar residues predominate over residues 1227 to 1241 (VSGSSGSTKEETQIP). Over residues 1437–1446 (SSPPTTPPSP) the composition is skewed to pro residues. N-linked (GlcNAc...) asparagine glycosylation occurs at Asn-1569. EGF-like domains follow at residues 1573–1613 (HQCV…VENP) and 1614–1661 (NPTC…IFCS). 6 disulfide bridges follow: Cys-1575/Cys-1586, Cys-1580/Cys-1596, Cys-1598/Cys-1609, Cys-1617/Cys-1630, Cys-1624/Cys-1644, and Cys-1646/Cys-1660. Ser-1661 carries the GPI-anchor amidated serine lipid modification. Positions 1662–1682 (SSNFLGISFLLILMLILYSFI) are cleaved as a propeptide — removed in mature form.

Forms a complex composed of subunits p83, p30, p38, and p42 which remain non-covalently associated; the complex is formed at the merozoite surface prior to egress from host erythrocytes. Forms a complex composed of processed MSP1 subunits, MSP6 subunit p36 and MSP7; the complex is formed at the merozoite surface prior to egress from host erythrocytes. Within the complex, interacts (via subunit p38) with MSP6 subunit p36 and (via subunits p83, p30 and p38) with MSP7 (via subunit p22). Forms a complex composed of MSP1, MSP6, DBLMSP1 and DBLMSP2. Within the complex, interacts (via subunit p38) with DBLMSP1 and DBLMSP2. Forms a complex composed of MSP1, and rhoptry proteins RhopH3, RAP1 and CLAG9/RhopH3. Within the complex, interacts (via subunits p42 and p19) with RhopH3 (via C-terminus). Forms a complex composed of MSP1, MSP6, MSP7, MSP9 and MSP3; within the complex, MSP6 and MSP9 mediate the binding to the host erythrocyte. Interacts (via subunits p19 and p42) with MSP9; the interaction is direct; MSP1 subunits p19 or p42, and MSP9 form a co-ligand complex that interacts with host SLC4A1/Band 3 protein. May interact with PFD6. Interacts with host spectrin. In terms of assembly, interacts with host glycophorin GYPA in a sialic acid-independent manner. As to quaternary structure, interacts with host proinflammatory cytokine S100P; the interaction blocks S100P inflammatory and chemotactic activities. Interacts with host SLC4A1/Band 3 (via 5ABC region) on the host erythrocyte surface in a sialic acid-independent manner. In terms of processing, the p190 precursor is cleaved by SUB1 prior to merozoite egress into 4 subunits p83, p30, p38, and p42 which remain non-covalently associated. SUB1-mediated proteolytic cleavage occurs in an orderly manner; the first cleavage occurs at the p30/p38 site, followed by cleavage at the p83/p30 site, the last cleavage occurs at the p38/p42 site. The order of cleavage is essential for parasite viability. SUB1-mediated processing is essential for merozoite egress. In a second processing step during erythrocyte invasion, p42 is cleaved by SUB2 into p33 and p19; the latter remains attached to the merozoite surface via its GPI-anchor and is endocytosed during the subsequent ring stage.

It localises to the cell membrane. The protein resides in the secreted. The protein localises to the vacuole membrane. During the asexual blood stage, involved in merozoite egress from host erythrocytes possibly via its interaction with the host cytoskeleton protein spectrin resulting in the destabilization of the host cytoskeleton and thus leading to erythrocyte cell membrane rupture. Involved in the binding to host erythrocytes and is required for host erythrocyte invasion. Its function is as follows. By binding to host proinflammatory cytokine S100P may interfere with host immune responses. In terms of biological role, involved in merozoite invasion of host erythrocytes. May play a role in the biogenesis and/or function of the food vacuole during the intraerythrocytic development. In Plasmodium falciparum (isolate ro-33 / Ghana), this protein is Merozoite surface protein 1.